A 364-amino-acid polypeptide reads, in one-letter code: Urease accessory protein UreD (364 aa).

Disordered regions lie at residues methionine 1–alanine 37 and proline 201–arginine 250. 3 stretches are compositionally biased toward low complexity: residues alanine 21–alanine 37, alanine 209–glutamate 218, and alanine 236–glycine 248.

Belongs to the UreD family. As to quaternary structure, ureD, UreF and UreG form a complex that acts as a GTP-hydrolysis-dependent molecular chaperone, activating the urease apoprotein by helping to assemble the nickel containing metallocenter of UreC. The UreE protein probably delivers the nickel.

The protein resides in the cytoplasm. In terms of biological role, required for maturation of urease via the functional incorporation of the urease nickel metallocenter. This Kocuria rhizophila (strain ATCC 9341 / DSM 348 / NBRC 103217 / DC2201) protein is Urease accessory protein UreD.